The following is a 544-amino-acid chain: Chaperonin GroEL (544 aa).

ATP contacts are provided by residues 29-32 (TLGP), 86-90 (DGTTT), Gly413, 476-478 (NAA), and Asp492.

This sequence belongs to the chaperonin (HSP60) family. In terms of assembly, forms a cylinder of 14 subunits composed of two heptameric rings stacked back-to-back. Interacts with the co-chaperonin GroES.

It localises to the cytoplasm. The catalysed reaction is ATP + H2O + a folded polypeptide = ADP + phosphate + an unfolded polypeptide.. Together with its co-chaperonin GroES, plays an essential role in assisting protein folding. The GroEL-GroES system forms a nano-cage that allows encapsulation of the non-native substrate proteins and provides a physical environment optimized to promote and accelerate protein folding. The chain is Chaperonin GroEL from Bacillus anthracis (strain A0248).